A 556-amino-acid polypeptide reads, in one-letter code: 2-succinyl-5-enolpyruvyl-6-hydroxy-3-cyclohexene-1-carboxylate synthase (556 aa).

Belongs to the TPP enzyme family. MenD subfamily. As to quaternary structure, homodimer. Mg(2+) serves as cofactor. Mn(2+) is required as a cofactor. It depends on thiamine diphosphate as a cofactor.

The enzyme catalyses isochorismate + 2-oxoglutarate + H(+) = 5-enolpyruvoyl-6-hydroxy-2-succinyl-cyclohex-3-ene-1-carboxylate + CO2. Its pathway is quinol/quinone metabolism; 1,4-dihydroxy-2-naphthoate biosynthesis; 1,4-dihydroxy-2-naphthoate from chorismate: step 2/7. The protein operates within quinol/quinone metabolism; menaquinone biosynthesis. Its function is as follows. Catalyzes the thiamine diphosphate-dependent decarboxylation of 2-oxoglutarate and the subsequent addition of the resulting succinic semialdehyde-thiamine pyrophosphate anion to isochorismate to yield 2-succinyl-5-enolpyruvyl-6-hydroxy-3-cyclohexene-1-carboxylate (SEPHCHC). This chain is 2-succinyl-5-enolpyruvyl-6-hydroxy-3-cyclohexene-1-carboxylate synthase, found in Citrobacter koseri (strain ATCC BAA-895 / CDC 4225-83 / SGSC4696).